Consider the following 94-residue polypeptide: MLKVNEYFDGNVKSIGFEQKGDKATVGVMEAGDYQFNTAAPERMTVVKGALTIQLADEDEWHTYSQGQSFEVAGHSSFKLEVKTPTAYLCEFLD.

It belongs to the nucleoside phosphorylase PpnP family.

The catalysed reaction is a purine D-ribonucleoside + phosphate = a purine nucleobase + alpha-D-ribose 1-phosphate. The enzyme catalyses adenosine + phosphate = alpha-D-ribose 1-phosphate + adenine. It carries out the reaction cytidine + phosphate = cytosine + alpha-D-ribose 1-phosphate. It catalyses the reaction guanosine + phosphate = alpha-D-ribose 1-phosphate + guanine. The catalysed reaction is inosine + phosphate = alpha-D-ribose 1-phosphate + hypoxanthine. The enzyme catalyses thymidine + phosphate = 2-deoxy-alpha-D-ribose 1-phosphate + thymine. It carries out the reaction uridine + phosphate = alpha-D-ribose 1-phosphate + uracil. It catalyses the reaction xanthosine + phosphate = alpha-D-ribose 1-phosphate + xanthine. In terms of biological role, catalyzes the phosphorolysis of diverse nucleosides, yielding D-ribose 1-phosphate and the respective free bases. Can use uridine, adenosine, guanosine, cytidine, thymidine, inosine and xanthosine as substrates. Also catalyzes the reverse reactions. This chain is Pyrimidine/purine nucleoside phosphorylase, found in Aeromonas salmonicida (strain A449).